A 315-amino-acid polypeptide reads, in one-letter code: Ester hydrolase C11orf54 homolog (315 aa).

His-266, His-268, and His-278 together coordinate Zn(2+).

As to quaternary structure, monomer. Requires Zn(2+) as cofactor.

The protein localises to the nucleus. The protein resides in the cytoplasm. Functionally, exhibits ester hydrolase activity on the substrate p-nitrophenyl acetate, in vitro. Regulates DNA damage and repair by regulating HIF1A degradation via chaperone-mediated autophagy (CMA). In Mus musculus (Mouse), this protein is Ester hydrolase C11orf54 homolog.